A 458-amino-acid polypeptide reads, in one-letter code: Bifunctional protein GlmU (458 aa).

A pyrophosphorylase region spans residues 1–229 (MNKFAIVLAA…FDESLGVNDR (229 aa)). Residues 8-11 (LAAG), Lys22, Gln72, and 77-78 (GT) each bind UDP-N-acetyl-alpha-D-glucosamine. Asp102 contributes to the Mg(2+) binding site. The UDP-N-acetyl-alpha-D-glucosamine site is built by Gly139, Glu154, Asn169, and Asn227. Asn227 serves as a coordination point for Mg(2+). Positions 230–250 (VALSQAEATMRKRINHEHMVN) are linker. The tract at residues 251–458 (GVTLIDPATT…AKKMPHYRGQ (208 aa)) is N-acetyltransferase. Arg332 and Lys350 together coordinate UDP-N-acetyl-alpha-D-glucosamine. His362 functions as the Proton acceptor in the catalytic mechanism. UDP-N-acetyl-alpha-D-glucosamine is bound by residues Tyr365 and Asn376. The acetyl-CoA site is built by Ala379, Ser404, Ala422, and Arg439.

The protein in the N-terminal section; belongs to the N-acetylglucosamine-1-phosphate uridyltransferase family. It in the C-terminal section; belongs to the transferase hexapeptide repeat family. As to quaternary structure, homotrimer. Mg(2+) is required as a cofactor.

The protein localises to the cytoplasm. The catalysed reaction is alpha-D-glucosamine 1-phosphate + acetyl-CoA = N-acetyl-alpha-D-glucosamine 1-phosphate + CoA + H(+). The enzyme catalyses N-acetyl-alpha-D-glucosamine 1-phosphate + UTP + H(+) = UDP-N-acetyl-alpha-D-glucosamine + diphosphate. It participates in nucleotide-sugar biosynthesis; UDP-N-acetyl-alpha-D-glucosamine biosynthesis; N-acetyl-alpha-D-glucosamine 1-phosphate from alpha-D-glucosamine 6-phosphate (route II): step 2/2. The protein operates within nucleotide-sugar biosynthesis; UDP-N-acetyl-alpha-D-glucosamine biosynthesis; UDP-N-acetyl-alpha-D-glucosamine from N-acetyl-alpha-D-glucosamine 1-phosphate: step 1/1. It functions in the pathway bacterial outer membrane biogenesis; LPS lipid A biosynthesis. In terms of biological role, catalyzes the last two sequential reactions in the de novo biosynthetic pathway for UDP-N-acetylglucosamine (UDP-GlcNAc). The C-terminal domain catalyzes the transfer of acetyl group from acetyl coenzyme A to glucosamine-1-phosphate (GlcN-1-P) to produce N-acetylglucosamine-1-phosphate (GlcNAc-1-P), which is converted into UDP-GlcNAc by the transfer of uridine 5-monophosphate (from uridine 5-triphosphate), a reaction catalyzed by the N-terminal domain. This chain is Bifunctional protein GlmU, found in Lactococcus lactis subsp. cremoris (strain MG1363).